Consider the following 227-residue polypeptide: Cytochrome c oxidase subunit 2 (227 aa).

Residues 1–14 (MAYPMQLGFQDATS) are Mitochondrial intermembrane-facing. A helical transmembrane segment spans residues 15–45 (PIMEELLHFHDHTLMIVLLISSLVLYIISLM). The Mitochondrial matrix portion of the chain corresponds to 46–59 (LTTKLTHTSTMDAQ). The chain crosses the membrane as a helical span at residues 60-87 (EVETIWTILPAIILILIALPSLRILYMM). The Mitochondrial intermembrane segment spans residues 88–227 (DEINNPSLTV…YFEKWSASML (140 aa)). Cu cation is bound by residues histidine 161, cysteine 196, glutamate 198, cysteine 200, histidine 204, and methionine 207. Residue glutamate 198 participates in Mg(2+) binding. Phosphotyrosine is present on tyrosine 218.

The protein belongs to the cytochrome c oxidase subunit 2 family. As to quaternary structure, component of the cytochrome c oxidase (complex IV, CIV), a multisubunit enzyme composed of 14 subunits. The complex is composed of a catalytic core of 3 subunits MT-CO1, MT-CO2 and MT-CO3, encoded in the mitochondrial DNA, and 11 supernumerary subunits COX4I, COX5A, COX5B, COX6A, COX6B, COX6C, COX7A, COX7B, COX7C, COX8 and NDUFA4, which are encoded in the nuclear genome. The complex exists as a monomer or a dimer and forms supercomplexes (SCs) in the inner mitochondrial membrane with NADH-ubiquinone oxidoreductase (complex I, CI) and ubiquinol-cytochrome c oxidoreductase (cytochrome b-c1 complex, complex III, CIII), resulting in different assemblies (supercomplex SCI(1)III(2)IV(1) and megacomplex MCI(2)III(2)IV(2)). Found in a complex with TMEM177, COA6, COX18, COX20, SCO1 and SCO2. Interacts with TMEM177 in a COX20-dependent manner. Interacts with COX20. Interacts with COX16. The cofactor is Cu cation.

It localises to the mitochondrion inner membrane. It catalyses the reaction 4 Fe(II)-[cytochrome c] + O2 + 8 H(+)(in) = 4 Fe(III)-[cytochrome c] + 2 H2O + 4 H(+)(out). Functionally, component of the cytochrome c oxidase, the last enzyme in the mitochondrial electron transport chain which drives oxidative phosphorylation. The respiratory chain contains 3 multisubunit complexes succinate dehydrogenase (complex II, CII), ubiquinol-cytochrome c oxidoreductase (cytochrome b-c1 complex, complex III, CIII) and cytochrome c oxidase (complex IV, CIV), that cooperate to transfer electrons derived from NADH and succinate to molecular oxygen, creating an electrochemical gradient over the inner membrane that drives transmembrane transport and the ATP synthase. Cytochrome c oxidase is the component of the respiratory chain that catalyzes the reduction of oxygen to water. Electrons originating from reduced cytochrome c in the intermembrane space (IMS) are transferred via the dinuclear copper A center (CU(A)) of subunit 2 and heme A of subunit 1 to the active site in subunit 1, a binuclear center (BNC) formed by heme A3 and copper B (CU(B)). The BNC reduces molecular oxygen to 2 water molecules using 4 electrons from cytochrome c in the IMS and 4 protons from the mitochondrial matrix. The sequence is that of Cytochrome c oxidase subunit 2 (MT-CO2) from Bubalus depressicornis (Lowland anoa).